The sequence spans 372 residues: Biotin synthase (372 aa).

The 236-residue stretch at 73–308 (CCGNTVDLCS…QQIIRYAGGR (236 aa)) folds into the Radical SAM core domain. The [4Fe-4S] cluster site is built by cysteine 91, cysteine 95, and cysteine 98. 4 residues coordinate [2Fe-2S] cluster: cysteine 136, cysteine 173, cysteine 233, and arginine 303.

It belongs to the radical SAM superfamily. Biotin synthase family. In terms of assembly, homodimer. It depends on [4Fe-4S] cluster as a cofactor. Requires [2Fe-2S] cluster as cofactor.

The enzyme catalyses (4R,5S)-dethiobiotin + (sulfur carrier)-SH + 2 reduced [2Fe-2S]-[ferredoxin] + 2 S-adenosyl-L-methionine = (sulfur carrier)-H + biotin + 2 5'-deoxyadenosine + 2 L-methionine + 2 oxidized [2Fe-2S]-[ferredoxin]. It participates in cofactor biosynthesis; biotin biosynthesis; biotin from 7,8-diaminononanoate: step 2/2. Its function is as follows. Catalyzes the conversion of dethiobiotin (DTB) to biotin by the insertion of a sulfur atom into dethiobiotin via a radical-based mechanism. This chain is Biotin synthase, found in Cyanothece sp. (strain PCC 7425 / ATCC 29141).